The chain runs to 555 residues: Trehalase (555 aa).

The N-terminal stretch at 1 to 16 (MIPFLLMVAFADTVLQ) is a signal peptide. Asparagine 46 carries an N-linked (GlcNAc...) asparagine glycan. Residues arginine 164, 171–172 (WD), and asparagine 208 contribute to the substrate site. N-linked (GlcNAc...) asparagine glycosylation occurs at asparagine 216. Substrate-binding positions include 217 to 219 (RSQ), 282 to 284 (RPE), and glycine 316. Aspartate 318 serves as the catalytic Proton donor/acceptor. N-linked (GlcNAc...) asparagine glycosylation is found at asparagine 334 and asparagine 371. The active-site Proton donor/acceptor is the glutamate 516. Position 531 (glutamate 531) interacts with substrate.

Belongs to the glycosyl hydrolase 37 family. In terms of tissue distribution, bean-shaped accessory glands (bags).

It localises to the secreted. The enzyme catalyses alpha,alpha-trehalose + H2O = alpha-D-glucose + beta-D-glucose. This is Trehalase from Tenebrio molitor (Yellow mealworm beetle).